Consider the following 412-residue polypeptide: MVNISEIPDDSNDGCDPNKKPEEQVLRRSRRIATRNENQNKKPKEEEEEDNRSVSFPIPNELTEACVALIRKCDYPSLSSVSSYFFNLIASSGLYETRSRLGLSETFLYAAIKFPDTNPANWYILHRNKVSSLRLTEVGSLPPVPWGCSVVTVGQEMYVIGGLLDIRRLQLMTLIDCRTHKCRSLPSMKRGRYKAAAGVVDGKIYVIGGFRMRKPDAEWIEVFDLKTQIWESLPGPYPRTSAGSQFSAHAVMEDKLYMLGSKFCLVYEPKRNGEWDASVGATPLKDLWDKTCCVVDDMLYTTDPRRTLGHPIVVYHPKDKTWRPVKGESLWSLPSYFFSKSEMANFGGKLVILGSNKSYVTGDCIGEKGIWCVMIELEKREGGEIWGKVESLDCVLGDINFLSVRLCQTLTI.

Residues Met1–Ser55 form a disordered region. The span at Asp16–Leu26 shows a compositional bias: basic and acidic residues. 4 Kelch repeats span residues Glu156–Gly202, Lys203–Ala250, Lys255–Thr291, and Cys292–Asn345.

In Arabidopsis thaliana (Mouse-ear cress), this protein is Kelch repeat-containing protein At1g19470.